Consider the following 291-residue polypeptide: ATP phosphoribosyltransferase (291 aa).

The protein belongs to the ATP phosphoribosyltransferase family. Long subfamily. Requires Mg(2+) as cofactor.

Its subcellular location is the cytoplasm. It catalyses the reaction 1-(5-phospho-beta-D-ribosyl)-ATP + diphosphate = 5-phospho-alpha-D-ribose 1-diphosphate + ATP. The protein operates within amino-acid biosynthesis; L-histidine biosynthesis; L-histidine from 5-phospho-alpha-D-ribose 1-diphosphate: step 1/9. With respect to regulation, feedback inhibited by histidine. Its function is as follows. Catalyzes the condensation of ATP and 5-phosphoribose 1-diphosphate to form N'-(5'-phosphoribosyl)-ATP (PR-ATP). Has a crucial role in the pathway because the rate of histidine biosynthesis seems to be controlled primarily by regulation of HisG enzymatic activity. This Desulfosudis oleivorans (strain DSM 6200 / JCM 39069 / Hxd3) (Desulfococcus oleovorans) protein is ATP phosphoribosyltransferase.